The chain runs to 406 residues: Ascaroside receptor GPR2 (406 aa).

Residues 1–29 are Extracellular-facing; the sequence is MTQLPYLLDRRGGALAAPATAWGDMMLNR. A helical transmembrane segment spans residues 30–50; the sequence is ALFSVALLSSVGSAWVVLSYA. Over 51–61 the chain is Cytoplasmic; it reads CIKELRSYRHQ. The helical transmembrane segment at 62–82 threads the bilayer; it reads LILGLAISDLLMSLNFMFSAG. Over 83–107 the chain is Extracellular; it reads WNVAGGDLALEESRTACSVNGFLTQ. A disulfide bridge connects residues C99 and C173. Residues 108-128 form a helical membrane-spanning segment; that stretch reads VFVVQTDWWILVIAIATYIIL. The Cytoplasmic portion of the chain corresponds to 129-143; the sequence is GNFKTQSQFIQTHVW. A helical membrane pass occupies residues 144–164; it reads IPWVGPWVLSIIIAAICHGVL. Residues 165-185 are Extracellular-facing; the sequence is GYGYIGGWCWLTSDLMRLLIN. The chain crosses the membrane as a helical span at residues 186–206; that stretch reads FIPRWLIVIAIALIYIRLYMI. The Cytoplasmic segment spans residues 207-326; sequence VRKARKWDIE…AAQLKRIAKK (120 aa). A helical transmembrane segment spans residues 327 to 347; the sequence is MMVYPVAYAIIWACPTAIRIY. Residues 348–356 are Extracellular-facing; the sequence is QGTTGSRAP. A helical membrane pass occupies residues 357 to 377; sequence LWITIVDKSCIVIQGLVDAVV. The Cytoplasmic segment spans residues 378–406; it reads YGLNERAWQGWRDHIRRIIYKNEGGRIIG.

The protein belongs to the G-protein coupled receptor 1 family. In terms of assembly, interacts with ascaroside receptor GPR3; may form a functional heterodimer. Interacts with guanine nucleotide-binding protein alpha GPA2; to activate adenylate cyclase and positively regulate nematode trap formation.

The protein localises to the cell membrane. Functionally, g protein-coupled receptor that senses nematode ascaroside pheromones and signals via adenylate cyclase to positively regulate trap formation for nematode capture. In Arthrobotrys oligospora (strain ATCC 24927 / CBS 115.81 / DSM 1491) (Nematode-trapping fungus), this protein is Ascaroside receptor GPR2.